Consider the following 406-residue polypeptide: Glutamyl-tRNA reductase (406 aa).

Residues 49-52, Ser107, 112-114, and Gln118 contribute to the substrate site; these read TCHR and EPQ. Cys50 (nucleophile) is an active-site residue. Residue 187-192 coordinates NADP(+); the sequence is GAGETG.

It belongs to the glutamyl-tRNA reductase family. Homodimer.

It carries out the reaction (S)-4-amino-5-oxopentanoate + tRNA(Glu) + NADP(+) = L-glutamyl-tRNA(Glu) + NADPH + H(+). It functions in the pathway porphyrin-containing compound metabolism; protoporphyrin-IX biosynthesis; 5-aminolevulinate from L-glutamyl-tRNA(Glu): step 1/2. Catalyzes the NADPH-dependent reduction of glutamyl-tRNA(Glu) to glutamate 1-semialdehyde (GSA). In Thermomicrobium roseum (strain ATCC 27502 / DSM 5159 / P-2), this protein is Glutamyl-tRNA reductase.